Reading from the N-terminus, the 526-residue chain is ATP synthase subunit alpha (526 aa).

171 to 178 lines the ATP pocket; sequence GDRQTGKT.

It belongs to the ATPase alpha/beta chains family. F-type ATPases have 2 components, CF(1) - the catalytic core - and CF(0) - the membrane proton channel. CF(1) has five subunits: alpha(3), beta(3), gamma(1), delta(1), epsilon(1). CF(0) has four main subunits: a, b, b' and c.

It localises to the cell inner membrane. It catalyses the reaction ATP + H2O + 4 H(+)(in) = ADP + phosphate + 5 H(+)(out). Produces ATP from ADP in the presence of a proton gradient across the membrane. The alpha chain is a regulatory subunit. This is ATP synthase subunit alpha from Chlorobium limicola (strain DSM 245 / NBRC 103803 / 6330).